Reading from the N-terminus, the 691-residue chain is Elongation factor G (691 aa).

The 276-residue stretch at 8 to 283 (DMQRNIGIMA…AVVDFLPSPV (276 aa)) folds into the tr-type G domain. Residues 17-24 (AHIDAGKT), 81-85 (DTPGH), and 135-138 (NKMD) each bind GTP.

The protein belongs to the TRAFAC class translation factor GTPase superfamily. Classic translation factor GTPase family. EF-G/EF-2 subfamily.

The protein resides in the cytoplasm. Its function is as follows. Catalyzes the GTP-dependent ribosomal translocation step during translation elongation. During this step, the ribosome changes from the pre-translocational (PRE) to the post-translocational (POST) state as the newly formed A-site-bound peptidyl-tRNA and P-site-bound deacylated tRNA move to the P and E sites, respectively. Catalyzes the coordinated movement of the two tRNA molecules, the mRNA and conformational changes in the ribosome. The sequence is that of Elongation factor G from Nitratidesulfovibrio vulgaris (strain ATCC 29579 / DSM 644 / CCUG 34227 / NCIMB 8303 / VKM B-1760 / Hildenborough) (Desulfovibrio vulgaris).